We begin with the raw amino-acid sequence, 282 residues long: Bifunctional protein FolD (282 aa).

Residues 162–164 (GRS), Ser187, and Val228 contribute to the NADP(+) site.

This sequence belongs to the tetrahydrofolate dehydrogenase/cyclohydrolase family. In terms of assembly, homodimer.

It catalyses the reaction (6R)-5,10-methylene-5,6,7,8-tetrahydrofolate + NADP(+) = (6R)-5,10-methenyltetrahydrofolate + NADPH. The catalysed reaction is (6R)-5,10-methenyltetrahydrofolate + H2O = (6R)-10-formyltetrahydrofolate + H(+). Its pathway is one-carbon metabolism; tetrahydrofolate interconversion. Catalyzes the oxidation of 5,10-methylenetetrahydrofolate to 5,10-methenyltetrahydrofolate and then the hydrolysis of 5,10-methenyltetrahydrofolate to 10-formyltetrahydrofolate. The chain is Bifunctional protein FolD from Thermus thermophilus (strain ATCC 27634 / DSM 579 / HB8).